A 225-amino-acid polypeptide reads, in one-letter code: MGQKVNPIGLRIGITRGWDSIWFSQSDYKKNLHEDIKIRKFIQSRFSNAGVVKVVIERFPEKINVNLHTAKPGIVIGQKGSNIEAVKKILKTMTEKPVNLNIIEVKKPETVAQCIAESIALQIEQRQPFRRVMKQELRRAMRGGVEGIKILISGRLNGADMARRENYKEGRIPLHTLRAKIDLGFKEAKTTFGQIGVKVWTYSGDFIQSKEESEEDKYAVKRRTS.

The region spanning I38 to K106 is the KH type-2 domain.

It belongs to the universal ribosomal protein uS3 family. Part of the 30S ribosomal subunit. Forms a tight complex with proteins S10 and S14.

Its function is as follows. Binds the lower part of the 30S subunit head. Binds mRNA in the 70S ribosome, positioning it for translation. This Leptospira borgpetersenii serovar Hardjo-bovis (strain JB197) protein is Small ribosomal subunit protein uS3.